A 181-amino-acid chain; its full sequence is Adenine phosphoribosyltransferase (181 aa).

This sequence belongs to the purine/pyrimidine phosphoribosyltransferase family. Homodimer.

Its subcellular location is the cytoplasm. The enzyme catalyses AMP + diphosphate = 5-phospho-alpha-D-ribose 1-diphosphate + adenine. It functions in the pathway purine metabolism; AMP biosynthesis via salvage pathway; AMP from adenine: step 1/1. Catalyzes a salvage reaction resulting in the formation of AMP, that is energically less costly than de novo synthesis. In Aliivibrio fischeri (strain ATCC 700601 / ES114) (Vibrio fischeri), this protein is Adenine phosphoribosyltransferase.